Consider the following 370-residue polypeptide: MKLNTLQLENYRNYDEVTLKCHPDVNILIGENAQGKTNLLESIYTLALAKSHRTSNDKELIRFNADYAKIEGELSYRHGTMPLTMFITKKGKQVKVNHLEQSRLTQYIGHLNVVLFAPEDLNIVKGSPQIRRRFIDMELGQISAVYLNDLAQYQRILKQKNNYLKQLQLGQKKDLTMLEVLNQQFAEYAMKVTDKRAHFIQELELLAKPIHAGITNDKEALSLNYLPSLKFDYAQNEAARLEEIMSILSDNMQREKERGISLFGPHRDDISFDVNGMDAQTYGSQGQQRTTALSIKLAEIELMNIEVGEYPILLLDDVLSELDDSRQTHLLSTIQHKVQTFVTTTSVDGIDHEIMNNAKLYRINQGEIIK.

Residue 30–37 coordinates ATP; it reads GENAQGKT.

This sequence belongs to the RecF family.

The protein resides in the cytoplasm. Functionally, the RecF protein is involved in DNA metabolism; it is required for DNA replication and normal SOS inducibility. RecF binds preferentially to single-stranded, linear DNA. It also seems to bind ATP. The protein is DNA replication and repair protein RecF of Staphylococcus aureus (strain bovine RF122 / ET3-1).